The chain runs to 346 residues: Glycerol-1-phosphate dehydrogenase [NAD(P)+] (346 aa).

NAD(+)-binding positions include 93–97 (GTIID) and 115–118 (TTAS). Aspartate 120 lines the substrate pocket. Serine 124 contributes to the NAD(+) binding site. Aspartate 167 is a binding site for substrate. Zn(2+) is bound by residues aspartate 167 and histidine 247. A substrate-binding site is contributed by histidine 251. Histidine 263 is a Zn(2+) binding site.

This sequence belongs to the glycerol-1-phosphate dehydrogenase family. Zn(2+) serves as cofactor.

It localises to the cytoplasm. The enzyme catalyses sn-glycerol 1-phosphate + NAD(+) = dihydroxyacetone phosphate + NADH + H(+). It carries out the reaction sn-glycerol 1-phosphate + NADP(+) = dihydroxyacetone phosphate + NADPH + H(+). Its pathway is membrane lipid metabolism; glycerophospholipid metabolism. Its function is as follows. Catalyzes the NAD(P)H-dependent reduction of dihydroxyacetonephosphate (DHAP or glycerone phosphate) to glycerol 1-phosphate (G1P). The G1P thus generated is used as the glycerophosphate backbone of phospholipids in the cellular membranes of Archaea. The chain is Glycerol-1-phosphate dehydrogenase [NAD(P)+] from Pyrococcus furiosus (strain ATCC 43587 / DSM 3638 / JCM 8422 / Vc1).